Reading from the N-terminus, the 1027-residue chain is Contactin-5 (1027 aa).

The signal sequence occupies residues 1-19; that stretch reads MMWLSWKLFLFLSLIGCLS. Ig-like C2-type domains follow at residues 32 to 117, 123 to 209, 227 to 307, 317 to 401, 407 to 494, and 498 to 593; these read PDDV…AVLQ, NFSG…RVLS, PKIE…RNVF, PQWV…AELK, PTFP…ASVS, and PTRI…TELL. Cysteines 50 and 100 form a disulfide. N-linked (GlcNAc...) asparagine glycans are attached at residues N65 and N123. Intrachain disulfides connect C144–C196 and C249–C296. Residues N324, N376, and N467 are each glycosylated (N-linked (GlcNAc...) asparagine). Intrachain disulfides connect C338-C385, C430-C478, and C520-C577. 4 Fibronectin type-III domains span residues 600–698, 703–800, 805–899, and 901–994; these read PPGV…TNEA, PPAN…SAEG, APID…TKKS, and PSQA…SYAG. N-linked (GlcNAc...) asparagine glycosylation is found at N706, N743, N858, and N929. The GPI-anchor amidated serine moiety is linked to residue S999. Positions 1000 to 1027 are cleaved as a propeptide — removed in mature form; it reads AQSTLHMFSTSSSSVTLLLVLMVPSTSW.

This sequence belongs to the immunoglobulin superfamily. Contactin family. In terms of assembly, interacts with INgCAM/L1 and the tenascin-R TNP protein. Does not interacts with NrCAM. As to expression, expressed by subpopulations of Purkinje cells in the cerebellum. Also expressed by one type of Purkinje cell afferents, the climbing fibers.

The protein localises to the cell membrane. Functionally, contactins mediate cell surface interactions during nervous system development. May contribute to the formation of somatotopic maps of cerebellar afferents during the development of the nervous system. This Gallus gallus (Chicken) protein is Contactin-5 (CNTN5).